Consider the following 63-residue polypeptide: Hypoxia-inducible lipid droplet-associated protein (63 aa).

The segment at 1 to 37 is required for targeting to lipid droplets; the sequence is MKHVLNLYLLGVVLTLLSIFVRVMESLEGLLESPSPG. A helical transmembrane segment spans residues 7-23; the sequence is LYLLGVVLTLLSIFVRV. The interval 31–63 is disordered; that stretch reads LESPSPGTSWTTRSQLANTEPTKGLPDHPSRSM. Positions 35–51 are enriched in polar residues; it reads SPGTSWTTRSQLANTEP. S44 is subject to Phosphoserine.

In terms of tissue distribution, highly expressed in renal cell carcinoma cells but barely detectable in adjacent normal kidney tissue. Detected in some cervical and endometrial cancers. Expression also detected in fetal kidney with little or no expression observed in normal adult heart, liver, lung, pancreas, prostate or spinal cord (at protein level).

It localises to the lipid droplet. It is found in the secreted. The protein resides in the membrane. In terms of biological role, increases intracellular lipid accumulation. Stimulates expression of cytokines including IL6, MIF and VEGFA. Enhances cell growth and proliferation. The sequence is that of Hypoxia-inducible lipid droplet-associated protein (HILPDA) from Homo sapiens (Human).